We begin with the raw amino-acid sequence, 282 residues long: Pantothenate synthetase (282 aa).

An ATP-binding site is contributed by 30–37; it reads MGYLHEGH. His-37 serves as the catalytic Proton donor. Position 61 (Gln-61) interacts with (R)-pantoate. Gln-61 contacts beta-alanine. Residue 147–150 participates in ATP binding; that stretch reads GMKD. Gln-153 is a (R)-pantoate binding site. ATP is bound by residues Val-176 and 184-187; that span reads KSSR.

It belongs to the pantothenate synthetase family. As to quaternary structure, homodimer.

Its subcellular location is the cytoplasm. The enzyme catalyses (R)-pantoate + beta-alanine + ATP = (R)-pantothenate + AMP + diphosphate + H(+). Its pathway is cofactor biosynthesis; (R)-pantothenate biosynthesis; (R)-pantothenate from (R)-pantoate and beta-alanine: step 1/1. Its function is as follows. Catalyzes the condensation of pantoate with beta-alanine in an ATP-dependent reaction via a pantoyl-adenylate intermediate. The chain is Pantothenate synthetase from Bacillus mycoides (strain KBAB4) (Bacillus weihenstephanensis).